A 348-amino-acid polypeptide reads, in one-letter code: MNGTEGPNFYVPFSNATGVVRSPFEYPQYYLAEPWQFSMLAAYMFLLIVLGFPINFLTLYVTVQHKKLRTPLNYILLNLAVADLFMVFGGFTTTLYTSLHGYFVFGPTGCNAEGFFATLGGEIALWSLVVLAIERYVVVCKPMSNFRFGENHAIMGVAFTWVMALACAAPPLFGWSRYIPEGLQCSCGIDYYTLKPEVNNESFVIYMFVVHFTIPMIVIFFCYGQLVFTVKEARAQQQESATTQKAEKEVTRMVIIMVIAFLICWVPYASVAFYIFTHQGSNFGPIFMTIPAFFAKSASIYNPVIYIMMNKQFRNCMLTTICCGKNPLGDDEASATVSKTETSQVAPA.

Met-1 carries the N-acetylmethionine modification. Residues 1–36 are Extracellular-facing; it reads MNGTEGPNFYVPFSNATGVVRSPFEYPQYYLAEPWQ. N-linked (GlcNAc...) asparagine glycosylation is found at Asn-2 and Asn-15. The chain crosses the membrane as a helical span at residues 37 to 61; it reads FSMLAAYMFLLIVLGFPINFLTLYV. Residues 62–73 lie on the Cytoplasmic side of the membrane; that stretch reads TVQHKKLRTPLN. Residues 74–96 form a helical membrane-spanning segment; that stretch reads YILLNLAVADLFMVFGGFTTTLY. The Extracellular portion of the chain corresponds to 97–110; sequence TSLHGYFVFGPTGC. Cysteines 110 and 187 form a disulfide. The helical transmembrane segment at 111–133 threads the bilayer; that stretch reads NAEGFFATLGGEIALWSLVVLAI. The 'Ionic lock' involved in activated form stabilization signature appears at 134–136; it reads ERY. Residues 134-152 are Cytoplasmic-facing; the sequence is ERYVVVCKPMSNFRFGENH. The helical transmembrane segment at 153–173 threads the bilayer; it reads AIMGVAFTWVMALACAAPPLF. The Extracellular segment spans residues 174-202; sequence GWSRYIPEGLQCSCGIDYYTLKPEVNNES. Glu-201 lines the Zn(2+) pocket. The chain crosses the membrane as a helical span at residues 203-224; that stretch reads FVIYMFVVHFTIPMIVIFFCYG. Residues 225-252 are Cytoplasmic-facing; the sequence is QLVFTVKEARAQQQESATTQKAEKEVTR. A helical transmembrane segment spans residues 253-274; the sequence is MVIIMVIAFLICWVPYASVAFY. At 275–286 the chain is on the extracellular side; the sequence is IFTHQGSNFGPI. Gln-279 is a binding site for Zn(2+). Residues 287–308 traverse the membrane as a helical segment; the sequence is FMTIPAFFAKSASIYNPVIYIM. At Lys-296 the chain carries N6-(retinylidene)lysine. Residues 309-348 lie on the Cytoplasmic side of the membrane; sequence MNKQFRNCMLTTICCGKNPLGDDEASATVSKTETSQVAPA. Residues Cys-322 and Cys-323 are each lipidated (S-palmitoyl cysteine). The segment at 330–348 is interaction with SAG; that stretch reads DDEASATVSKTETSQVAPA. Ser-334 carries the phosphoserine modification. Thr-336 is modified (phosphothreonine). Ser-338 carries the phosphoserine modification. Residues Thr-340 and Thr-342 each carry the phosphothreonine modification. Ser-343 carries the post-translational modification Phosphoserine.

Belongs to the G-protein coupled receptor 1 family. Opsin subfamily. In terms of assembly, homodimer. May form a complex composed of RHO, GRK1 and RCVRN in a Ca(2+)-dependent manner; RCVRN prevents the interaction between GRK1 and RHO. Interacts with GRK1. Interacts (phosphorylated form) with SAG. Interacts with GNAT1. Interacts with GNAT3. SAG and G-proteins compete for a common binding site. Interacts with PRCD; the interaction promotes PRCD stability. Forms a complex with ASAP1 and ARF4. Forms a complex with ASAP1, RAB11A, Rabin8/RAB3IP, ARF4 and RAB11FIP3; the complex regulates Golgi-to-cilia rhodopsin/RHO transport in photoreceptors. Phosphorylated on some or all of the serine and threonine residues present in the C-terminal region. In terms of processing, contains one covalently linked retinal chromophore. Upon light absorption, the covalently bound 11-cis-retinal is converted to all-trans-retinal. After hydrolysis of the Schiff base and release of the covalently bound all-trans-retinal, active rhodopsin is regenerated by binding of a fresh molecule of 11-cis-retinal.

It is found in the membrane. The protein resides in the cell projection. The protein localises to the cilium. It localises to the photoreceptor outer segment. In terms of biological role, photoreceptor required for image-forming vision at low light intensity. Required for photoreceptor cell viability after birth. Light-induced isomerization of 11-cis to all-trans retinal triggers a conformational change that activates signaling via G-proteins. Subsequent receptor phosphorylation mediates displacement of the bound G-protein alpha subunit by the arrestin SAG and terminates signaling. The polypeptide is Rhodopsin (RHO) (Macaca fascicularis (Crab-eating macaque)).